Here is a 399-residue protein sequence, read N- to C-terminus: Putative 3'-5' exonuclease R431 (399 aa).

One can recognise a 3'-5' exonuclease domain in the interval 118–297; it reads FQIVDNWIEN…IYNELQLMTN (180 aa). The region spanning 335-399 is the R3H domain; the sequence is ERRLKSIESK…NKYVIITRHC (65 aa).

In Acanthamoeba polyphaga (Amoeba), this protein is Putative 3'-5' exonuclease R431.